The chain runs to 291 residues: Bifunctional protein FolD 1 (291 aa).

NADP(+)-binding positions include 167–169 (GAS), Ile-192, and Ile-233.

The protein belongs to the tetrahydrofolate dehydrogenase/cyclohydrolase family. In terms of assembly, homodimer.

It catalyses the reaction (6R)-5,10-methylene-5,6,7,8-tetrahydrofolate + NADP(+) = (6R)-5,10-methenyltetrahydrofolate + NADPH. It carries out the reaction (6R)-5,10-methenyltetrahydrofolate + H2O = (6R)-10-formyltetrahydrofolate + H(+). It functions in the pathway one-carbon metabolism; tetrahydrofolate interconversion. Catalyzes the oxidation of 5,10-methylenetetrahydrofolate to 5,10-methenyltetrahydrofolate and then the hydrolysis of 5,10-methenyltetrahydrofolate to 10-formyltetrahydrofolate. The chain is Bifunctional protein FolD 1 from Pseudomonas putida (strain ATCC 47054 / DSM 6125 / CFBP 8728 / NCIMB 11950 / KT2440).